A 177-amino-acid polypeptide reads, in one-letter code: Large ribosomal subunit protein uL6 (177 aa).

It belongs to the universal ribosomal protein uL6 family. As to quaternary structure, part of the 50S ribosomal subunit.

In terms of biological role, this protein binds to the 23S rRNA, and is important in its secondary structure. It is located near the subunit interface in the base of the L7/L12 stalk, and near the tRNA binding site of the peptidyltransferase center. The polypeptide is Large ribosomal subunit protein uL6 (Methylococcus capsulatus (strain ATCC 33009 / NCIMB 11132 / Bath)).